The chain runs to 147 residues: Putative pre-16S rRNA nuclease (147 aa).

Belongs to the YqgF nuclease family.

It is found in the cytoplasm. In terms of biological role, could be a nuclease involved in processing of the 5'-end of pre-16S rRNA. This chain is Putative pre-16S rRNA nuclease, found in Latilactobacillus sakei subsp. sakei (strain 23K) (Lactobacillus sakei subsp. sakei).